Here is a 208-residue protein sequence, read N- to C-terminus: Small ribosomal subunit protein uS4 (208 aa).

The tract at residues 24–52 (GVKPFDVKTKKANKAPGQHGQARGGKQSE) is disordered. In terms of domain architecture, S4 RNA-binding spans 98 to 160 (SRLDNVVYRM…AKQQLRIKNA (63 aa)).

This sequence belongs to the universal ribosomal protein uS4 family. Part of the 30S ribosomal subunit. Contacts protein S5. The interaction surface between S4 and S5 is involved in control of translational fidelity.

Its function is as follows. One of the primary rRNA binding proteins, it binds directly to 16S rRNA where it nucleates assembly of the body of the 30S subunit. Functionally, with S5 and S12 plays an important role in translational accuracy. The protein is Small ribosomal subunit protein uS4 of Acinetobacter baumannii (strain ACICU).